The sequence spans 327 residues: Urease accessory protein 4 (327 aa).

A glycan (N-linked (GlcNAc...) asparagine) is linked at asparagine 120. The helical transmembrane segment at 239–259 (VYATVLIIGPHLTTLFSYLAY) threads the bilayer.

Belongs to the UreD family. As to quaternary structure, URE4, URE6 and URE7 may form a complex that acts as a GTP-hydrolysis-dependent molecular chaperone, activating the urease apoprotein URE1.

It localises to the membrane. In terms of biological role, urease accessory protein required for the maturation and activation of urease via the functional incorporation of the urease nickel metallocenter. Plays a role in host brain invasion. In Cryptococcus neoformans var. grubii serotype A (strain H99 / ATCC 208821 / CBS 10515 / FGSC 9487) (Filobasidiella neoformans var. grubii), this protein is Urease accessory protein 4.